Reading from the N-terminus, the 176-residue chain is Flavodoxin (176 aa).

One can recognise a Flavodoxin-like domain in the interval 4-172; it reads IGIFFGTDTG…RLASWLEEIK (169 aa).

It belongs to the flavodoxin family. FMN serves as cofactor.

Its function is as follows. Low-potential electron donor to a number of redox enzymes. NifF is the electron donor to nitrogenase. The protein is Flavodoxin (nifF) of Klebsiella pneumoniae.